Consider the following 574-residue polypeptide: Hyaluronan synthase 3 (574 aa).

Residues Met-1 to Ser-15 lie on the Cytoplasmic side of the membrane. A helical membrane pass occupies residues Leu-16 to Ile-36. The Extracellular portion of the chain corresponds to His-37 to Ser-44. Residues Phe-45–Leu-65 form a helical membrane-spanning segment. The Cytoplasmic portion of the chain corresponds to Glu-66 to Leu-398. Residues Trp-399 to Ile-419 form a helical membrane-spanning segment. At Gln-420 to Asn-429 the chain is on the extracellular side. Residues Ile-430–Phe-450 traverse the membrane as a helical segment. The Cytoplasmic segment spans residues Leu-451–Glu-456. A helical transmembrane segment spans residues Met-457–Phe-477. Topologically, residues Ala-478–Thr-494 are extracellular. Residues Ile-495 to Gly-515 form a helical membrane-spanning segment. At Leu-516–Glu-530 the chain is on the cytoplasmic side. The chain crosses the membrane as a helical span at residues Val-531–Leu-551. At Tyr-552–Val-574 the chain is on the extracellular side.

It belongs to the NodC/HAS family. Requires Mg(2+) as cofactor. In terms of processing, O-GlcNAcylation increases the hyaluronan synthase activity, HAS3 stability and its plasma membrane residence. The concentration of UDP-GlcNAc controls the level of O-GlcNAc modification.

The protein resides in the cell membrane. The protein localises to the golgi apparatus membrane. It is found in the golgi apparatus. Its subcellular location is the trans-Golgi network membrane. It localises to the cytoplasmic vesicle. The enzyme catalyses [hyaluronan](n) + UDP-N-acetyl-alpha-D-glucosamine = N-acetyl-beta-D-glucosaminyl-(1-&gt;4)-[hyaluronan](n) + UDP + H(+). It catalyses the reaction N-acetyl-beta-D-glucosaminyl-(1-&gt;4)-[hyaluronan](n) + UDP-alpha-D-glucuronate = [hyaluronan](n+1) + UDP + H(+). Its pathway is glycan biosynthesis; hyaluronan biosynthesis. Its function is as follows. Catalyzes the addition of GlcNAc or GlcUA monosaccharides to the nascent hyaluronan polymer. Therefore, it is essential to hyaluronan synthesis a major component of most extracellular matrices that has a structural role in tissues architectures and regulates cell adhesion, migration and differentiation. This is one of three isoenzymes responsible for cellular hyaluronan synthesis. This is Hyaluronan synthase 3 (HAS3) from Gallus gallus (Chicken).